The chain runs to 73 residues: Translation initiation factor IF-1 (73 aa).

One can recognise an S1-like domain in the interval 1–73 (MSKKKDVIEM…TRGRITYRYK (73 aa)).

Belongs to the IF-1 family. In terms of assembly, component of the 30S ribosomal translation pre-initiation complex which assembles on the 30S ribosome in the order IF-2 and IF-3, IF-1 and N-formylmethionyl-tRNA(fMet); mRNA recruitment can occur at any time during PIC assembly.

It is found in the cytoplasm. Its function is as follows. One of the essential components for the initiation of protein synthesis. Stabilizes the binding of IF-2 and IF-3 on the 30S subunit to which N-formylmethionyl-tRNA(fMet) subsequently binds. Helps modulate mRNA selection, yielding the 30S pre-initiation complex (PIC). Upon addition of the 50S ribosomal subunit IF-1, IF-2 and IF-3 are released leaving the mature 70S translation initiation complex. The polypeptide is Translation initiation factor IF-1 (Chloroflexus aurantiacus (strain ATCC 29366 / DSM 635 / J-10-fl)).